Consider the following 520-residue polypeptide: 2-isopropylmalate synthase (520 aa).

One can recognise a Pyruvate carboxyltransferase domain in the interval 5–267 (VIIFDTTLRD…YTNINHQEIY (263 aa)). Mn(2+) is bound by residues D14, H202, H204, and N238. Residues 392 to 520 (HLDNFNIQSG…RIQQNTKEMV (129 aa)) are regulatory domain.

It belongs to the alpha-IPM synthase/homocitrate synthase family. LeuA type 1 subfamily. In terms of assembly, homodimer. Mn(2+) is required as a cofactor.

It localises to the cytoplasm. The catalysed reaction is 3-methyl-2-oxobutanoate + acetyl-CoA + H2O = (2S)-2-isopropylmalate + CoA + H(+). It functions in the pathway amino-acid biosynthesis; L-leucine biosynthesis; L-leucine from 3-methyl-2-oxobutanoate: step 1/4. Its function is as follows. Catalyzes the condensation of the acetyl group of acetyl-CoA with 3-methyl-2-oxobutanoate (2-ketoisovalerate) to form 3-carboxy-3-hydroxy-4-methylpentanoate (2-isopropylmalate). This is 2-isopropylmalate synthase from Photorhabdus laumondii subsp. laumondii (strain DSM 15139 / CIP 105565 / TT01) (Photorhabdus luminescens subsp. laumondii).